The primary structure comprises 786 residues: Leucine-rich repeat extensin-like protein 2 (786 aa).

The N-terminal stretch at 1–28 (MLLFPSTSLRLFFFLFLLFSSCFLQIRG) is a signal peptide. N-linked (GlcNAc...) asparagine glycosylation is found at Asn-73 and Asn-79. 9 LRR repeats span residues 100-124 (TRVV…LGLL), 125-147 (TDLA…TFKH), 149-172 (KLLF…VLSL), 173-196 (PSLK…LFDK), 198-219 (LDAI…MGNS), 221-243 (VSAL…GLMG), 244-267 (KTLN…IGNL), 268-291 (KNVT…IGNM), and 292-315 (KSLE…ICQL). 2 N-linked (GlcNAc...) asparagine glycosylation sites follow: Asn-255 and Asn-269. 2 N-linked (GlcNAc...) asparagine glycosylation sites follow: Asn-320 and Asn-346. 4 disordered regions span residues 352-372 (IDGK…SRSV), 390-589 (FKMS…YYAV), 624-645 (PPVY…YYPP), and 694-786 (PPPS…IPYY). Over residues 353–362 (DGKEDQRSSK) the composition is skewed to basic and acidic residues. The contains the Ser-Pro(4) repeats stretch occupies residues 384 to 786 (SPPPPSFKMS…SPPPPSIPYY (403 aa)). 3 stretches are compositionally biased toward pro residues: residues 460–477 (YPPP…PPPS), 487–542 (YPPP…PPPK), and 566–589 (SPPP…YYAV). 4 stretches are compositionally biased toward pro residues: residues 694 to 713 (PPPS…PPST), 720 to 737 (PASP…PPPK), 752 to 769 (PTPP…PLPP), and 777 to 786 (SPPPPSIPYY).

Hydroxylated on proline residues in the S-P-P-P-P repeat. In terms of processing, O-glycosylated on hydroxyprolines. Mostly expressed in roots, also present in stems at low levels. In roots, confined to differentiation zones, the collet, and meristematic cells of tips.

It localises to the secreted. The protein resides in the cell wall. In terms of biological role, modulates cell morphogenesis by regulating cell wall formation and assembly, and/or growth polarization. Together with LRX2, component of the extracellular mechanism regulating root hair morphogenesis and elongation. The chain is Leucine-rich repeat extensin-like protein 2 (LRX2) from Arabidopsis thaliana (Mouse-ear cress).